We begin with the raw amino-acid sequence, 307 residues long: Undecaprenyl-diphosphatase 2 (307 aa).

Transmembrane regions (helical) follow at residues 19 to 41, 56 to 76, 117 to 137, 144 to 164, 208 to 228, 229 to 249, 251 to 271, and 285 to 305; these read GVTE…IIGF, IHMF…VLYW, FKFW…GLPF, LLFF…WMIF, IIGA…SFFL, AIPM…VVLS, VQIL…LVVV, and IFAV…FTKV.

Belongs to the UppP family.

Its subcellular location is the cell membrane. The enzyme catalyses di-trans,octa-cis-undecaprenyl diphosphate + H2O = di-trans,octa-cis-undecaprenyl phosphate + phosphate + H(+). In terms of biological role, catalyzes the dephosphorylation of undecaprenyl diphosphate (UPP). Confers resistance to bacitracin. This chain is Undecaprenyl-diphosphatase 2, found in Clostridium acetobutylicum (strain ATCC 824 / DSM 792 / JCM 1419 / IAM 19013 / LMG 5710 / NBRC 13948 / NRRL B-527 / VKM B-1787 / 2291 / W).